Consider the following 33-residue polypeptide: Cytochrome b6-f complex subunit 8 (33 aa).

Residues 2 to 22 traverse the membrane as a helical segment; that stretch reads LFTLAWASLAAVFSFSIAMVV.

Belongs to the PetN family. The 4 large subunits of the cytochrome b6-f complex are cytochrome b6, subunit IV (17 kDa polypeptide, PetD), cytochrome f and the Rieske protein, while the 4 small subunits are PetG, PetL, PetM and PetN. The complex functions as a dimer.

Its subcellular location is the cellular thylakoid membrane. In terms of biological role, component of the cytochrome b6-f complex, which mediates electron transfer between photosystem II (PSII) and photosystem I (PSI), cyclic electron flow around PSI, and state transitions. The sequence is that of Cytochrome b6-f complex subunit 8 from Synechococcus sp. (strain WH7803).